Reading from the N-terminus, the 297-residue chain is Phosphoribosylaminoimidazole-succinocarboxamide synthase (297 aa).

The protein belongs to the SAICAR synthetase family.

The enzyme catalyses 5-amino-1-(5-phospho-D-ribosyl)imidazole-4-carboxylate + L-aspartate + ATP = (2S)-2-[5-amino-1-(5-phospho-beta-D-ribosyl)imidazole-4-carboxamido]succinate + ADP + phosphate + 2 H(+). It functions in the pathway purine metabolism; IMP biosynthesis via de novo pathway; 5-amino-1-(5-phospho-D-ribosyl)imidazole-4-carboxamide from 5-amino-1-(5-phospho-D-ribosyl)imidazole-4-carboxylate: step 1/2. The protein is Phosphoribosylaminoimidazole-succinocarboxamide synthase of Methylobacillus flagellatus (strain ATCC 51484 / DSM 6875 / VKM B-1610 / KT).